The sequence spans 368 residues: Meiotic driver wtf23 (368 aa).

Positions 1-98 (MKNKYYPLRS…SSGTADNSST (98 aa)) are disordered. A compositionally biased stretch (basic and acidic residues) spans 11–29 (SMDELSAKNDNEIDLEKGP). Composition is skewed to polar residues over residues 57-72 (GANN…STTP) and 89-98 (SSGTADNSST). Transmembrane regions (helical) follow at residues 105 to 124 (FLSF…YLTY), 139 to 158 (YFGV…WYFY), 170 to 192 (IFLA…VISI), 202 to 221 (MIII…GCVK), 234 to 256 (STCT…FWTF), 266 to 283 (VFLL…TMFL), and 328 to 350 (GIAF…FRGG).

Belongs to the WTF family. As to quaternary structure, homomer. Forms protein aggregates. The two isoforms can interact with each other and with themselves. High sequence similarity is required for their interaction.

It is found in the spore membrane. Its subcellular location is the vacuole membrane. It localises to the ascus epiplasm. The protein localises to the cytoplasm. The protein resides in the endoplasmic reticulum membrane. Its function is as follows. Promotes unequal transmission of alleles from the parental zygote to progeny spores by acting as poison/antidote system where the poison and antidote proteins are produced from the same locus; the poison component is trans-acting and targets all spores within an ascus whereas the antidote component is spore-specific, leading to poisoning of all progeny that do not inherit the allele. In terms of biological role, localizes isoform 2 to the vacuole thereby facilitating its degradation. Forms toxic aggregates that disrupt spore maturation. This Schizosaccharomyces pombe (strain 972 / ATCC 24843) (Fission yeast) protein is Meiotic driver wtf23.